A 161-amino-acid polypeptide reads, in one-letter code: Cyclic pyranopterin monophosphate synthase (161 aa).

Substrate-binding positions include 73-75 and 110-111; these read LCH and ME. Residue Asp-125 is part of the active site.

The protein belongs to the MoaC family. Homohexamer; trimer of dimers.

It catalyses the reaction (8S)-3',8-cyclo-7,8-dihydroguanosine 5'-triphosphate = cyclic pyranopterin phosphate + diphosphate. It participates in cofactor biosynthesis; molybdopterin biosynthesis. Functionally, catalyzes the conversion of (8S)-3',8-cyclo-7,8-dihydroguanosine 5'-triphosphate to cyclic pyranopterin monophosphate (cPMP). This chain is Cyclic pyranopterin monophosphate synthase, found in Pseudomonas syringae pv. tomato (strain ATCC BAA-871 / DC3000).